A 456-amino-acid chain; its full sequence is Acid sphingomyelinase-like phosphodiesterase 3b (456 aa).

An N-terminal signal peptide occupies residues 1–18; the sequence is MTLLGWLIFLAPWGVAGA. Positions 28 and 30 each coordinate Zn(2+). An N-linked (GlcNAc...) asparagine glycan is attached at Asn-34. A disulfide bridge connects residues Cys-45 and Cys-64. Asn-72 carries N-linked (GlcNAc...) asparagine glycosylation. Asp-93 contacts Zn(2+). N-linked (GlcNAc...) asparagine glycosylation is present at Asn-100. Residue Asn-134 coordinates Zn(2+). 2 N-linked (GlcNAc...) asparagine glycosylation sites follow: Asn-164 and Asn-223. Zn(2+) contacts are provided by His-236, His-277, and His-279. 2 disulfide bridges follow: Cys-405–Cys-409 and Cys-415–Cys-428.

This sequence belongs to the acid sphingomyelinase family. Interacts with TLR4, TLR7, TLR8 and TLR9. Zn(2+) serves as cofactor. In terms of processing, N-glycosylated. Macrophages and dendritic cells.

It localises to the secreted. The protein resides in the cell membrane. Its function is as follows. Lipid-modulating phosphodiesterase. Active on the surface of macrophages and dendritic cells and strongly influences macrophage lipid composition and membrane fluidity. Acts as a negative regulator of Toll-like receptor signaling. Has in vitro phosphodiesterase activity, but the physiological substrate is unknown. Lacks activity with phosphocholine-containing lipids, but can cleave CDP-choline, and can release phosphate from ATP and ADP (in vitro). The protein is Acid sphingomyelinase-like phosphodiesterase 3b (Smpdl3b) of Mus musculus (Mouse).